A 118-amino-acid polypeptide reads, in one-letter code: Small ribosomal subunit protein uS13 (118 aa).

The segment at 92 to 118 (RKGLPVRGQRTKTNARTRKGPRKPIRK) is disordered.

It belongs to the universal ribosomal protein uS13 family. In terms of assembly, part of the 30S ribosomal subunit. Forms a loose heterodimer with protein S19. Forms two bridges to the 50S subunit in the 70S ribosome.

Located at the top of the head of the 30S subunit, it contacts several helices of the 16S rRNA. In the 70S ribosome it contacts the 23S rRNA (bridge B1a) and protein L5 of the 50S subunit (bridge B1b), connecting the 2 subunits; these bridges are implicated in subunit movement. Contacts the tRNAs in the A and P-sites. The protein is Small ribosomal subunit protein uS13 of Pseudomonas putida (strain ATCC 700007 / DSM 6899 / JCM 31910 / BCRC 17059 / LMG 24140 / F1).